We begin with the raw amino-acid sequence, 974 residues long: MAQLYYKKVNYSPYRDRIPLQIVRAETELSAEEKAFLNAVEKGDYATVKQALQEAEIYYNVNINCMDPLGRSALLIAIENENLEIMELLLNHSVYVGDALLYAIRKEVVGAVELLLSYRKPSGEKQVPTLMMDTQFSEFTPDITPIMLAAHTNNYEIIKLLVQKRVTIPRPHQIRCNCVECVSSSEVDSLRHSRSRLNIYKALASPSLIALSSEDPILTAFRLGWELKELSKVENEFKAEYEELSQQCKLFAKDLLDQARSSRELEIILNHRDDHSEELDPQKYHDLAKLKVAIKYHQKEFVAQPNCQQLLATLWYDGFPGWRRKHWVVKLLTCMTIGFLFPMLSIAYLISPRSNLGLFIKKPFIKFICHTASYLTFLFMLLLASQHIVRTDLHVQGPPPTVVEWMILPWVLGFIWGEIKEMWDGGFTEYIHDWWNLMDFAMNSLYLATISLKIVAYVKYNGSRPREEWEMWHPTLIAEALFAISNILSSLRLISLFTANSHLGPLQISLGRMLLDILKFLFIYCLVLLAFANGLNQLYFYYETRAIDEPNNCKGIRCEKQNNAFSTLFETLQSLFWSVFGLLNLYVTNVKARHEFTEFVGATMFGTYNVISLVVLLNMLIAMMNNSYQLIADHADIEWKFARTKLWMSYFDEGGTLPPPFNIIPSPKSFLYLGNWFNNTFCPKRDPDGRRRRHNLRSFTERHADSLIQNQHYQEVIRNLVKRYVAAMIRNSKTNEGLTEENFKELKQDISSFRYEVLDLLGNRKQPRRSLSTSSTELSQRDDTNDGSGGARAKSKSVSFNLGCKKKACHGPPLIRTMPRASGAQGKSKAESSSKRSFMGPSLKKLGLLFSKFNGHMSEPSSEPMYTISDGIVQQHYMWQDIRYSQMEKGKAEACSQSEINLSEVELGEVRGAAQSSECPLTCSSSLHCASSICSSNSKLLDSSEDVFETWGEACDLLMHKWGDGQEEQVTTRL.

Residues 1–325 (MAQLYYKKVN…YDGFPGWRRK (325 aa)) are Cytoplasmic-facing. 4 ANK repeats span residues 30–60 (SAEEKAFLNAVEKGDYATVKQALQEAEIYYN), 69–97 (LGRSALLIAIENENLEIMELLLNHSVYVG), 98–124 (DALLYAIRKEVVGAVELLLSYRKPSGE), and 141–170 (PDITPIMLAAHTNNYEIIKLLVQKRVTIPR). Residues H172, C176, C178, and C181 each coordinate Zn(2+). Positions 326-360 (HWVVKLLTCMTIGFLFPMLSIAYLISPRSNLGLFI) form an intramembrane region, discontinuously helical. Residues 361–363 (KKP) are Cytoplasmic-facing. The helical transmembrane segment at 364–384 (FIKFICHTASYLTFLFMLLLA) threads the bilayer. The Extracellular segment spans residues 385–404 (SQHIVRTDLHVQGPPPTVVE). A helical membrane pass occupies residues 405-419 (WMILPWVLGFIWGEI). 4 residues coordinate Ca(2+): E418, E421, N436, and D439. The Cytoplasmic portion of the chain corresponds to 420–433 (KEMWDGGFTEYIHD). The helical transmembrane segment at 434 to 454 (WWNLMDFAMNSLYLATISLKI) threads the bilayer. The Extracellular segment spans residues 455–476 (VAYVKYNGSRPREEWEMWHPTL). N-linked (GlcNAc...) asparagine glycosylation is present at N461. Residues 477–497 (IAEALFAISNILSSLRLISLF) traverse the membrane as a helical segment. Over 498 to 512 (TANSHLGPLQISLGR) the chain is Cytoplasmic. Residues 513–535 (MLLDILKFLFIYCLVLLAFANGL) form a helical membrane-spanning segment. The Extracellular segment spans residues 536–603 (NQLYFYYETR…HEFTEFVGAT (68 aa)). Cysteines 553 and 558 form a disulfide. Residues 604–624 (MFGTYNVISLVVLLNMLIAMM) traverse the membrane as a helical segment. At 625 to 974 (NNSYQLIADH…GQEEQVTTRL (350 aa)) the chain is on the cytoplasmic side. Disordered regions lie at residues 766–795 (QPRRSLSTSSTELSQRDDTNDGSGGARAKS) and 811–838 (GPPLIRTMPRASGAQGKSKAESSSKRSF). The span at 769-778 (RSLSTSSTEL) shows a compositional bias: low complexity. The essential for binding to NHERF1 PDZ domain stretch occupies residues 972–974 (TRL).

The protein belongs to the transient receptor (TC 1.A.4) family. STrpC subfamily. TRPC5 sub-subfamily. As to quaternary structure, homotetramer. Heterotetramer with TRPC1 and/or TRPC4. Each subunit in the homomeric ion channel (via ANK repeats) interacts with one copy of GTP-bound GNAI3; the interaction is direct and activates the ion channel. Interacts with TRPC4AP. Interacts with NHERF1. Interacts with MX1 and RNF24. Interacts (via C-terminus) with CABP1. Interacts with SESTD1 (via the spectrin 1 repeat). Interacts with PLSCR1. Interacts with PKD2L2. As to expression, expressed in brain.

It is found in the cell membrane. It carries out the reaction Ca(2+)(in) = Ca(2+)(out). Its activity is regulated as follows. Activated by G-protein coupled receptors via direct interaction with GTP-bound GNAI3, which increases the channel sensitivity to phosphatidylinositol bisphosphate. May be activated by intracellular calcium store depletion. Calcium channel activity is enhanced by MYLK, that promotes its subcellular localization at the plasma membrane. In terms of biological role, forms a receptor-activated non-selective calcium permeant cation channel. Mediates calcium-dependent phosphatidylserine externalization and apoptosis in neurons via its association with PLSCR1. Acts on distinct neuronal populations in the hypothalamus to regulate innate behaviors including feeding, anxiety (flight/fight/fear), socialization and maternal care. This Oryctolagus cuniculus (Rabbit) protein is Short transient receptor potential channel 5 (TRPC5).